A 502-amino-acid chain; its full sequence is Lysine--tRNA ligase (502 aa).

Positions 413 and 420 each coordinate Mg(2+).

This sequence belongs to the class-II aminoacyl-tRNA synthetase family. As to quaternary structure, homodimer. Mg(2+) is required as a cofactor.

Its subcellular location is the cytoplasm. The enzyme catalyses tRNA(Lys) + L-lysine + ATP = L-lysyl-tRNA(Lys) + AMP + diphosphate. In Haemophilus influenzae (strain 86-028NP), this protein is Lysine--tRNA ligase.